A 452-amino-acid polypeptide reads, in one-letter code: Phosphoglucosamine mutase (452 aa).

Ser108 (phosphoserine intermediate) is an active-site residue. Mg(2+)-binding residues include Ser108, Asp247, Asp249, and Asp251. Phosphoserine is present on Ser108.

Belongs to the phosphohexose mutase family. Mg(2+) is required as a cofactor. In terms of processing, activated by phosphorylation.

The catalysed reaction is alpha-D-glucosamine 1-phosphate = D-glucosamine 6-phosphate. Functionally, catalyzes the conversion of glucosamine-6-phosphate to glucosamine-1-phosphate. This chain is Phosphoglucosamine mutase, found in Burkholderia pseudomallei (strain 668).